The sequence spans 268 residues: Probable histidine-binding protein (268 aa).

Positions 1–20 (MNMKKWIAAALACSALALSA) are cleaved as a signal peptide. The N-palmitoyl cysteine moiety is linked to residue cysteine 21. Cysteine 21 carries S-diacylglycerol cysteine lipidation.

It belongs to the bacterial solute-binding protein 3 family.

It is found in the cell membrane. Functionally, involved in histidine transport. The chain is Probable histidine-binding protein (hisJ) from Neisseria gonorrhoeae.